Here is a 370-residue protein sequence, read N- to C-terminus: Gap junction delta-4 protein (370 aa).

At 1–19 (MEGVDLLGFLIITLNCNVT) the chain is on the cytoplasmic side. The chain crosses the membrane as a helical span at residues 20-40 (MXGKLWFVLTMLLRMLVIVLA). Residues 41–76 (GRPVYQDEQERFVCNTLQPGCANVCYDVFSPVSHLR) are Extracellular-facing. Residues 77 to 97 (FWLIQGVCVLLPSAVFSVYVL) traverse the membrane as a helical segment. Over 98 to 146 (HRGATLAALGPRRCPEPRDTASGQRRCPGSCRERGGLEVPDFSAGYIIH) the chain is Cytoplasmic. The helical transmembrane segment at 147–167 (LLLRTLLEAAFGALNYLLFGF) threads the bilayer. The Extracellular portion of the chain corresponds to 168–196 (LAPNKFPCTRPPCTGVVDCYVSRPTEKSL). Residues 197–217 (LMLFLWAVSALSFLLGLADLV) form a helical membrane-spanning segment. Over 218–370 (CSLRRLMRRR…HLRARKSEWV (153 aa)) the chain is Cytoplasmic. The segment at 227 to 370 (RPGPPTSPSI…HLRARKSEWV (144 aa)) is disordered. Positions 246–260 (PEGRPTDKEGGREQE) are enriched in basic and acidic residues. A compositionally biased stretch (low complexity) spans 331–345 (PSAAPSHLAAHPSCS).

This sequence belongs to the connexin family. Delta-type subfamily. In terms of assembly, a connexon is composed of a hexamer of connexins.

It localises to the cell membrane. The protein localises to the cell junction. It is found in the gap junction. One gap junction consists of a cluster of closely packed pairs of transmembrane channels, the connexons, through which materials of low MW diffuse from one cell to a neighboring cell. This chain is Gap junction delta-4 protein (GJD4), found in Macaca fascicularis (Crab-eating macaque).